Consider the following 473-residue polypeptide: Photosystem II CP43 reaction center protein (473 aa).

A propeptide spanning residues 1-14 (MKILYSQRRFYPVE) is cleaved from the precursor. Thr-15 is subject to N-acetylthreonine. Thr-15 carries the post-translational modification Phosphothreonine. 5 helical membrane-spanning segments follow: residues 69 to 93 (LFEV…PHLA), 134 to 155 (LIGP…KDKN), 178 to 200 (KALY…RKIT), 255 to 275 (KPFA…LSYS), and 291 to 312 (WFNN…ASQA). Glu-367 contacts [CaMn4O5] cluster. The helical transmembrane segment at 447–471 (RARAAAAGFEKGIDRDFEPVLSMTP) threads the bilayer.

It belongs to the PsbB/PsbC family. PsbC subfamily. As to quaternary structure, PSII is composed of 1 copy each of membrane proteins PsbA, PsbB, PsbC, PsbD, PsbE, PsbF, PsbH, PsbI, PsbJ, PsbK, PsbL, PsbM, PsbT, PsbX, PsbY, PsbZ, Psb30/Ycf12, at least 3 peripheral proteins of the oxygen-evolving complex and a large number of cofactors. It forms dimeric complexes. The cofactor is Binds multiple chlorophylls and provides some of the ligands for the Ca-4Mn-5O cluster of the oxygen-evolving complex. It may also provide a ligand for a Cl- that is required for oxygen evolution. PSII binds additional chlorophylls, carotenoids and specific lipids.. Post-translationally, phosphorylated on threonine residue(s).

The protein resides in the plastid. It localises to the chloroplast thylakoid membrane. One of the components of the core complex of photosystem II (PSII). It binds chlorophyll and helps catalyze the primary light-induced photochemical processes of PSII. PSII is a light-driven water:plastoquinone oxidoreductase, using light energy to abstract electrons from H(2)O, generating O(2) and a proton gradient subsequently used for ATP formation. This Marchantia polymorpha (Common liverwort) protein is Photosystem II CP43 reaction center protein.